The following is a 119-amino-acid chain: Holo-[acyl-carrier-protein] synthase (119 aa).

Mg(2+) is bound by residues Asp8 and Glu60.

It belongs to the P-Pant transferase superfamily. AcpS family. Mg(2+) serves as cofactor.

It is found in the cytoplasm. The enzyme catalyses apo-[ACP] + CoA = holo-[ACP] + adenosine 3',5'-bisphosphate + H(+). Transfers the 4'-phosphopantetheine moiety from coenzyme A to a Ser of acyl-carrier-protein. The protein is Holo-[acyl-carrier-protein] synthase of Staphylococcus haemolyticus (strain JCSC1435).